The following is a 155-amino-acid chain: 6,7-dimethyl-8-ribityllumazine synthase (155 aa).

5-amino-6-(D-ribitylamino)uracil-binding positions include Phe-23, 57–59 (AFE), and 81–83 (AVI). 86–87 (AT) lines the (2S)-2-hydroxy-3-oxobutyl phosphate pocket. His-89 (proton donor) is an active-site residue. Position 114 (Phe-114) interacts with 5-amino-6-(D-ribitylamino)uracil. Residue Arg-128 coordinates (2S)-2-hydroxy-3-oxobutyl phosphate.

It belongs to the DMRL synthase family.

The enzyme catalyses (2S)-2-hydroxy-3-oxobutyl phosphate + 5-amino-6-(D-ribitylamino)uracil = 6,7-dimethyl-8-(1-D-ribityl)lumazine + phosphate + 2 H2O + H(+). It participates in cofactor biosynthesis; riboflavin biosynthesis; riboflavin from 2-hydroxy-3-oxobutyl phosphate and 5-amino-6-(D-ribitylamino)uracil: step 1/2. Functionally, catalyzes the formation of 6,7-dimethyl-8-ribityllumazine by condensation of 5-amino-6-(D-ribitylamino)uracil with 3,4-dihydroxy-2-butanone 4-phosphate. This is the penultimate step in the biosynthesis of riboflavin. The sequence is that of 6,7-dimethyl-8-ribityllumazine synthase from Geotalea uraniireducens (strain Rf4) (Geobacter uraniireducens).